Consider the following 301-residue polypeptide: Acetylglutamate kinase (301 aa).

Substrate is bound by residues G72–G73, R94, and N199.

The protein belongs to the acetylglutamate kinase family. ArgB subfamily.

Its subcellular location is the cytoplasm. It catalyses the reaction N-acetyl-L-glutamate + ATP = N-acetyl-L-glutamyl 5-phosphate + ADP. It functions in the pathway amino-acid biosynthesis; L-arginine biosynthesis; N(2)-acetyl-L-ornithine from L-glutamate: step 2/4. In terms of biological role, catalyzes the ATP-dependent phosphorylation of N-acetyl-L-glutamate. This Azorhizobium caulinodans (strain ATCC 43989 / DSM 5975 / JCM 20966 / LMG 6465 / NBRC 14845 / NCIMB 13405 / ORS 571) protein is Acetylglutamate kinase.